The sequence spans 973 residues: Sodium/calcium exchanger 1 (973 aa).

The signal sequence occupies residues 1 to 35; it reads MYNMRRLSLSPTFSMGFHLLVTVSLLFSHVDHVIA. The Extracellular segment spans residues 36-74; the sequence is ETEMEGEGNETGECTGSYYCKKGVILPIWEPQDPSFGDK. Residue Asn-44 is glycosylated (N-linked (GlcNAc...) asparagine). Residues 75–95 traverse the membrane as a helical segment; sequence IARATVYFVAMVYMFLGVSII. Topologically, residues 96–136 are cytoplasmic; it reads ADRFMSSIEVITSQEKEITIKKPNGETTKTTVRIWNETVSN. A helical membrane pass occupies residues 137-157; it reads LTLMALGSSAPEILLSVIEVC. An Alpha-1 repeat occupies 141-181; that stretch reads ALGSSAPEILLSVIEVCGHNFTAGDLGPSTIVGSAAFNMFI. Topologically, residues 158 to 170 are extracellular; the sequence is GHNFTAGDLGPST. N-linked (GlcNAc...) asparagine glycosylation is present at Asn-160. The chain crosses the membrane as a helical span at residues 171–191; it reads IVGSAAFNMFIIIALCVYVVP. Residues 192-204 lie on the Cytoplasmic side of the membrane; the sequence is DGETRKIKHLRVF. Residues 205–225 form a helical membrane-spanning segment; the sequence is FVTAAWSIFAYTWLYIILSVI. The Extracellular portion of the chain corresponds to 226–231; sequence SPGVVE. The helical transmembrane segment at 232 to 252 threads the bilayer; sequence VWEGLLTFFFFPICVVFAWVA. Residues 253 to 800 are Cytoplasmic-facing; sequence DRRLLFYKYV…FVPPTEYWNG (548 aa). The segment at 254–273 is putative calmodulin-binding region; the sequence is RRLLFYKYVYKRYRAGKQRG. A phosphoserine mark is found at Ser-285 and Ser-392. 2 Calx-beta domains span residues 396–496 and 527–627; these read VNTE…VHLS and ATVT…LEIG. The Ca(2+) site is built by Glu-420, Asp-456, Asp-481, Asp-482, Ile-484, Glu-486, Glu-489, Asp-533, Asp-534, Asp-535, Glu-551, Asp-587, Asp-613, Glu-614, Glu-615, and Glu-718. Residues 801 to 821 form a helical membrane-spanning segment; sequence WACFIVSILMIGLLTAFIGDL. Residues 822 to 824 are Extracellular-facing; sequence ASH. A helical transmembrane segment spans residues 825–845; sequence FGCTIGLKDSVTAVVFVALGT. An Alpha-2 repeat occupies 842–878; the sequence is ALGTSVPDTFASKVAATQDQYADASIGNVTGSNAVNV. Residues 846–874 lie on the Cytoplasmic side of the membrane; that stretch reads SVPDTFASKVAATQDQYADASIGNVTGSN. The helical transmembrane segment at 875 to 895 threads the bilayer; it reads AVNVFLGIGVAWSIAAIYHAA. Residues 896-906 are Extracellular-facing; the sequence is NGEQFKVSPGT. Residues 907-927 form a helical membrane-spanning segment; the sequence is LAFSVTLFTIFAFINVGVLLY. Over 928–944 the chain is Cytoplasmic; it reads RRRPEIGGELGGPRTAK. The chain crosses the membrane as a helical span at residues 945–965; the sequence is LLTSCLFVLLWLLYIFFSSLE. Over 966–973 the chain is Extracellular; the sequence is AYCHIKGF.

The protein belongs to the Ca(2+):cation antiporter (CaCA) (TC 2.A.19) family. SLC8 subfamily. As to expression, detected primarily in heart and at lower levels in brain. Expressed in cardiac sarcolemma, brain, kidney, liver, pancreas, skeletal muscle, placenta and lung.

The protein resides in the cell membrane. It catalyses the reaction Ca(2+)(in) + 3 Na(+)(out) = Ca(2+)(out) + 3 Na(+)(in). Its activity is regulated as follows. Activated by micromolar levels of Ca(2+). Mediates the exchange of one Ca(2+) ion against three to four Na(+) ions across the cell membrane, and thereby contributes to the regulation of cytoplasmic Ca(2+) levels and Ca(2+)-dependent cellular processes. Contributes to Ca(2+) transport during excitation-contraction coupling in muscle. In a first phase, voltage-gated channels mediate the rapid increase of cytoplasmic Ca(2+) levels due to release of Ca(2+) stores from the endoplasmic reticulum. SLC8A1 mediates the export of Ca(2+) from the cell during the next phase, so that cytoplasmic Ca(2+) levels rapidly return to baseline. Required for normal embryonic heart development and the onset of heart contractions. The protein is Sodium/calcium exchanger 1 (SLC8A1) of Homo sapiens (Human).